Consider the following 671-residue polypeptide: Copper amine oxidase 1 (671 aa).

The interval 3–106 (PHPLAILSEE…QHRVVGKEHH (104 aa)) is N2. The tract at residues 107–211 (ASLTLSEFDT…DRPATGGKGE (105 aa)) is N3. 319–330 (AFDFGDGGGGNM) is a substrate binding site. Catalysis depends on Asp-321, which acts as the Proton acceptor. A disulfide bridge connects residues Cys-340 and Cys-366. 402 to 407 (LANYEY) contacts substrate. The Schiff-base intermediate with substrate; via topaquinone role is filled by Tyr-405. The residue at position 405 (Tyr-405) is a 2',4',5'-topaquinone. His-455 and His-457 together coordinate Cu cation. Asp-464 lines the Mn(2+) pocket. Asn-471 carries N-linked (GlcNAc...) asparagine glycosylation. Asp-606 is a binding site for Mn(2+). His-617 contacts Cu cation.

It belongs to the copper/topaquinone oxidase family. As to quaternary structure, homodimer. Requires Cu cation as cofactor. It depends on Zn(2+) as a cofactor. L-topaquinone is required as a cofactor. Mn(2+) serves as cofactor. Topaquinone (TPQ) is generated by copper-dependent autoxidation of a specific tyrosyl residue.

It carries out the reaction histamine + O2 + H2O = imidazole-4-acetaldehyde + H2O2 + NH4(+). The chain is Copper amine oxidase 1 (AO-I) from Aspergillus niger.